The sequence spans 330 residues: Putative glycosyltransferase HI_0258 (330 aa).

A compositionally biased stretch (basic and acidic residues) spans 1 to 31; the sequence is MTDRQTDRQTDRQTDRQTDRQTDRQTDRQTD. Residues 1–32 form a disordered region; the sequence is MTDRQTDRQTDRQTDRQTDRQTDRQTDRQTDG. UDP-binding positions include 44–49 and 140–141; these read SSDHYY and DV. Residues D140, D142, and H270 each contribute to the Mn(2+) site. 270–276 serves as a coordination point for UDP; that stretch reads HYCGPNK.

It belongs to the glycosyltransferase 8 family.

The chain is Putative glycosyltransferase HI_0258 from Haemophilus influenzae (strain ATCC 51907 / DSM 11121 / KW20 / Rd).